A 420-amino-acid polypeptide reads, in one-letter code: 2,3-dimethylmalate dehydratase large subunit (420 aa).

Residues Cys-301, Cys-361, and Cys-364 each contribute to the [4Fe-4S] cluster site.

It belongs to the aconitase/IPM isomerase family. LeuC type 2 subfamily. As to quaternary structure, heterodimer of a large and a small subunit. [4Fe-4S] cluster serves as cofactor.

It carries out the reaction (2R,3S)-2,3-dimethylmalate = dimethylmaleate + H2O. Its pathway is cofactor degradation; nicotinate degradation; propanoate and pyruvate from 6-hydroxynicotinate: step 7/8. The sequence is that of 2,3-dimethylmalate dehydratase large subunit (dmdA) from Eubacterium barkeri (Clostridium barkeri).